A 37-amino-acid polypeptide reads, in one-letter code: Photosystem II reaction center protein T (37 aa).

The helical transmembrane segment at A3 to F23 threads the bilayer.

This sequence belongs to the PsbT family. PSII is composed of 1 copy each of membrane proteins PsbA, PsbB, PsbC, PsbD, PsbE, PsbF, PsbH, PsbI, PsbJ, PsbK, PsbL, PsbM, PsbT, PsbY, PsbZ, Psb30/Ycf12, at least 3 peripheral proteins of the oxygen-evolving complex and a large number of cofactors. It forms dimeric complexes.

The protein localises to the plastid. The protein resides in the chloroplast thylakoid membrane. In terms of biological role, found at the monomer-monomer interface of the photosystem II (PS II) dimer, plays a role in assembly and dimerization of PSII. PSII is a light-driven water plastoquinone oxidoreductase, using light energy to abstract electrons from H(2)O, generating a proton gradient subsequently used for ATP formation. In Cucumis sativus (Cucumber), this protein is Photosystem II reaction center protein T.